Consider the following 270-residue polypeptide: Protein-ADP-ribose hydrolase (270 aa).

The region spanning 73–267 (VSVKDCQKTN…LYDTYLQKEN (195 aa)) is the Macro domain. The ADP-D-ribose site is built by Asp92, Ile93, and Asn106. Positions 112, 117, and 119 each coordinate Zn(2+). ADP-D-ribose contacts are provided by Cys119, Ile120, Asp121, Ser212, Thr213, Gly214, Glu215, and Phe216.

This sequence belongs to the MacroD-type family. Zn-Macro subfamily. It depends on Zn(2+) as a cofactor.

It catalyses the reaction 4-O-(ADP-D-ribosyl)-L-aspartyl-[protein] + H2O = L-aspartyl-[protein] + ADP-D-ribose + H(+). In terms of biological role, ADP-ribosylhydrolase that specifically reverses the SirTM-mediated mono-ADP-ribosylation at an asparatate residue of GcvH-L, by releasing ADP-ribose from the target protein. May play a role in the regulation of the response to host-induced oxidative stress. The polypeptide is Protein-ADP-ribose hydrolase (Streptococcus pyogenes serotype M1).